The chain runs to 429 residues: MPAIVLIGAQWGDEGKGKATDLLGEQLQWVVRYQGGNNAGHTVVLPNGDKFALHLIPSGILTPAVNNVIGNGVVVDPGVLLTELAGLEERGVDTSRLLLSADAHLIMPYHVAIDKVTERFLGAKKIGTTGRGIGPCYQDKIARVGVRAADVLDEKILTQKVEAALEFKNQVLVKIYNRKALDPQQVVEEVLTQAEGFKHRISDTRLELNLALERGETVLLEGSQGTLLDVDHGTYPYVTSSNPTSGGAAVGSGIGPTKITTVLGILKAYTTRVGSGPFPTELFDDHGAYLAKQGGEVGVTTGRARRTGWFDAVIARYATRVNGITDYFLTKLDVLSSLDTVPICVAYEVDGVRHDEMPMSQSDIHHAKPIYEEMPGWWEDISEARTFEELPQNAQNYVLRLEELSGAFISCIGVGPGRDETIVRREIVR.

GTP contacts are provided by residues 12-18 and 40-42; these read GDEGKGK and GHT. D13 functions as the Proton acceptor in the catalytic mechanism. The Mg(2+) site is built by D13 and G40. IMP is bound by residues 13 to 16, 38 to 41, T129, R143, Q224, T239, and R303; these read DEGK and NAGH. H41 functions as the Proton donor in the catalytic mechanism. 299–305 is a binding site for substrate; sequence VTTGRAR. GTP is bound by residues R305, 331 to 333, and 413 to 415; these read KLD and GVG.

The protein belongs to the adenylosuccinate synthetase family. In terms of assembly, homodimer. It depends on Mg(2+) as a cofactor.

Its subcellular location is the cytoplasm. The enzyme catalyses IMP + L-aspartate + GTP = N(6)-(1,2-dicarboxyethyl)-AMP + GDP + phosphate + 2 H(+). It participates in purine metabolism; AMP biosynthesis via de novo pathway; AMP from IMP: step 1/2. In terms of biological role, plays an important role in the de novo pathway of purine nucleotide biosynthesis. Catalyzes the first committed step in the biosynthesis of AMP from IMP. The chain is Adenylosuccinate synthetase from Rhodococcus erythropolis (strain PR4 / NBRC 100887).